The primary structure comprises 453 residues: Ribosomal protein uS12 methylthiotransferase RimO (453 aa).

The MTTase N-terminal domain maps to 5 to 120 (PKVGFVSLGC…VMQAVHSHLP (116 aa)). 6 residues coordinate [4Fe-4S] cluster: cysteine 14, cysteine 50, cysteine 79, cysteine 151, cysteine 155, and cysteine 158. Residues 137-383 (LTPRHYAYLK…EVAEEVSAHR (247 aa)) enclose the Radical SAM core domain. The 69-residue stretch at 385–453 (QRKVGKTLKV…ADGHDLWGEV (69 aa)) folds into the TRAM domain.

Belongs to the methylthiotransferase family. RimO subfamily. [4Fe-4S] cluster is required as a cofactor.

Its subcellular location is the cytoplasm. It carries out the reaction L-aspartate(89)-[ribosomal protein uS12]-hydrogen + (sulfur carrier)-SH + AH2 + 2 S-adenosyl-L-methionine = 3-methylsulfanyl-L-aspartate(89)-[ribosomal protein uS12]-hydrogen + (sulfur carrier)-H + 5'-deoxyadenosine + L-methionine + A + S-adenosyl-L-homocysteine + 2 H(+). Catalyzes the methylthiolation of an aspartic acid residue of ribosomal protein uS12. This Burkholderia cenocepacia (strain ATCC BAA-245 / DSM 16553 / LMG 16656 / NCTC 13227 / J2315 / CF5610) (Burkholderia cepacia (strain J2315)) protein is Ribosomal protein uS12 methylthiotransferase RimO.